Consider the following 837-residue polypeptide: Outer membrane usher protein HifC (837 aa).

Residues Met1–Ala26 form the signal peptide. Cys813 and Cys833 are joined by a disulfide.

It belongs to the fimbrial export usher family.

The protein localises to the cell outer membrane. In terms of biological role, essential for piliation. The sequence is that of Outer membrane usher protein HifC (hifC) from Haemophilus influenzae.